The following is a 298-amino-acid chain: Small ribosomal subunit protein uS2 (298 aa).

This sequence belongs to the universal ribosomal protein uS2 family.

This Leifsonia xyli subsp. xyli (strain CTCB07) protein is Small ribosomal subunit protein uS2.